We begin with the raw amino-acid sequence, 181 residues long: Ribosome maturation factor RimM (181 aa).

Positions 98–177 (EGEFFYCDLI…KITTHNAKTL (80 aa)) constitute a PRC barrel domain.

The protein belongs to the RimM family. In terms of assembly, binds ribosomal protein uS19.

It localises to the cytoplasm. Functionally, an accessory protein needed during the final step in the assembly of 30S ribosomal subunit, possibly for assembly of the head region. Essential for efficient processing of 16S rRNA. May be needed both before and after RbfA during the maturation of 16S rRNA. It has affinity for free ribosomal 30S subunits but not for 70S ribosomes. The protein is Ribosome maturation factor RimM of Helicobacter pylori (strain J99 / ATCC 700824) (Campylobacter pylori J99).